Consider the following 348-residue polypeptide: Dihydroorotase (348 aa).

Zn(2+)-binding residues include histidine 17 and histidine 19. Substrate is bound by residues 19–21 and asparagine 45; that span reads HLR. Positions 103, 140, and 178 each coordinate Zn(2+). An N6-carboxylysine modification is found at lysine 103. Histidine 140 provides a ligand contact to substrate. Leucine 223 serves as a coordination point for substrate. Aspartate 251 provides a ligand contact to Zn(2+). Aspartate 251 is an active-site residue. The substrate site is built by histidine 255 and alanine 267.

This sequence belongs to the metallo-dependent hydrolases superfamily. DHOase family. Class II DHOase subfamily. As to quaternary structure, homodimer. The cofactor is Zn(2+).

The enzyme catalyses (S)-dihydroorotate + H2O = N-carbamoyl-L-aspartate + H(+). Its pathway is pyrimidine metabolism; UMP biosynthesis via de novo pathway; (S)-dihydroorotate from bicarbonate: step 3/3. Its function is as follows. Catalyzes the reversible cyclization of carbamoyl aspartate to dihydroorotate. The polypeptide is Dihydroorotase (Escherichia coli (strain UTI89 / UPEC)).